The chain runs to 121 residues: Tachykinin-3 (121 aa).

The signal sequence occupies residues 1–16; sequence MRIMLLFTAILAFSLA. A propeptide spanning residues 17–78 is cleaved from the precursor; that stretch reads QSFGAVCKEP…TDPKESTSPE (62 aa). A Methionine amide modification is found at M90. Residues 93-121 are disordered; that stretch reads RSVQPDSPTDVNQENVPSFGILKYPPRAE. Positions 94-121 are excised as a propeptide; sequence SVQPDSPTDVNQENVPSFGILKYPPRAE. The span at 96–108 shows a compositional bias: polar residues; it reads QPDSPTDVNQENV.

It belongs to the tachykinin family.

Its subcellular location is the secreted. Its function is as follows. Tachykinins are active peptides which excite neurons, evoke behavioral responses, are potent vasodilators and secretagogues, and contract (directly or indirectly) many smooth muscles. Is a critical central regulator of gonadal function. The chain is Tachykinin-3 (TAC3) from Homo sapiens (Human).